A 261-amino-acid polypeptide reads, in one-letter code: tRNA pseudouridine synthase A 2 (261 aa).

Aspartate 59 acts as the Nucleophile in catalysis. Tyrosine 117 provides a ligand contact to substrate.

It belongs to the tRNA pseudouridine synthase TruA family. Homodimer.

The enzyme catalyses uridine(38/39/40) in tRNA = pseudouridine(38/39/40) in tRNA. Functionally, formation of pseudouridine at positions 38, 39 and 40 in the anticodon stem and loop of transfer RNAs. This is tRNA pseudouridine synthase A 2 from Desulfotalea psychrophila (strain LSv54 / DSM 12343).